The sequence spans 451 residues: Tubulin alpha-1/alpha-2 chain (451 aa).

Gln11 is a GTP binding site. Lys40 carries the post-translational modification N6-acetyllysine. The GTP site is built by Glu71, Gly144, Thr145, Thr179, Asn206, and Asn228. Glu71 is a Mg(2+) binding site. Glu254 is a catalytic residue.

This sequence belongs to the tubulin family. Dimer of alpha and beta chains. A typical microtubule is a hollow water-filled tube with an outer diameter of 25 nm and an inner diameter of 15 nM. Alpha-beta heterodimers associate head-to-tail to form protofilaments running lengthwise along the microtubule wall with the beta-tubulin subunit facing the microtubule plus end conferring a structural polarity. Microtubules usually have 13 protofilaments but different protofilament numbers can be found in some organisms and specialized cells. Mg(2+) is required as a cofactor. In terms of processing, undergoes a tyrosination/detyrosination cycle, the cyclic removal and re-addition of a C-terminal tyrosine residue by the enzymes tubulin tyrosine carboxypeptidase (TTCP) and tubulin tyrosine ligase (TTL), respectively. Acetylation of alpha chains at Lys-40 stabilizes microtubules and affects affinity and processivity of microtubule motors. This modification has a role in multiple cellular functions, ranging from cell motility, cell cycle progression or cell differentiation to intracellular trafficking and signaling.

The protein resides in the cytoplasm. It localises to the cytoskeleton. The catalysed reaction is GTP + H2O = GDP + phosphate + H(+). Functionally, tubulin is the major constituent of microtubules, a cylinder consisting of laterally associated linear protofilaments composed of alpha- and beta-tubulin heterodimers. Microtubules grow by the addition of GTP-tubulin dimers to the microtubule end, where a stabilizing cap forms. Below the cap, tubulin dimers are in GDP-bound state, owing to GTPase activity of alpha-tubulin. In Volvox carteri (Green alga), this protein is Tubulin alpha-1/alpha-2 chain (TUBA1).